Reading from the N-terminus, the 163-residue chain is Nucleotide-binding protein Clos_1967 (163 aa).

The protein belongs to the YajQ family.

Nucleotide-binding protein. The chain is Nucleotide-binding protein Clos_1967 from Alkaliphilus oremlandii (strain OhILAs) (Clostridium oremlandii (strain OhILAs)).